The sequence spans 537 residues: Myosin-binding protein H (537 aa).

Low complexity predominate over residues 1-25 (MTGKTAPAAAKKAPAAKKAPAPASK). Residues 1 to 138 (MTGKTAPAAA…KPKEEPPSVP (138 aa)) are disordered. The span at 26–69 (KAPEPAPKEKPAPTPKEGHAPTPKEEHAPPPKEEHAPPPKEEHA) shows a compositional bias: basic and acidic residues. The span at 87–104 (EQPAAPAAEHAPTPTHEA) shows a compositional bias: low complexity. Positions 112-124 (PPPAAPAEAPAPE) are enriched in pro residues. Residues 137–232 (VPLSLAVEEV…LEQPVLIREI (96 aa)) enclose the Fibronectin type-III 1 domain. Residues 236–324 (PRIRLPRQLR…NGAEDKAILD (89 aa)) form the Ig-like C2-type 1 domain. A Fibronectin type-III 2 domain is found at 333 to 428 (PPQNLKLVDV…AAGVAHIKKT (96 aa)). One can recognise an Ig-like C2-type 2 domain in the interval 444–528 (PKFTQPLTDR…VNPLGEASVD (85 aa)).

It belongs to the immunoglobulin superfamily. MyBP family. In terms of tissue distribution, skeletal muscle. Seems to be also expressed in the slow tonic ald muscle. Not detected in gizzard or heart.

Its function is as follows. Binds to myosin; probably involved in interaction with thick myofilaments in the A-band. The chain is Myosin-binding protein H (MYBPH) from Gallus gallus (Chicken).